The primary structure comprises 44 residues: Thymosin beta-4 (44 aa).

Residues 1–25 (MADKPDMAEIEKFDKSKLKKTETQE) show a composition bias toward basic and acidic residues. Residues 1–44 (MADKPDMAEIEKFDKSKLKKTETQEKNPLPSKETIEQEKQAGES) are disordered. At A2 the chain carries N-acetylalanine. An N6-acetyllysine modification is found at K4. K12 is subject to N6-acetyllysine; alternate. K12 participates in a covalent cross-link: Glycyl lysine isopeptide (Lys-Gly) (interchain with G-Cter in SUMO2); alternate. The residue at position 23 (T23) is a Phosphothreonine. K26 carries the N6-acetyllysine modification. S31 bears the Phosphoserine mark. At K32 the chain carries N6-acetyllysine. Basic and acidic residues predominate over residues 33–44 (ETIEQEKQAGES). T34 is subject to Phosphothreonine. Position 39 is an N6-acetyllysine (K39).

Belongs to the thymosin beta family. In terms of tissue distribution, originally found in thymus but it is widely distributed in many tissues.

It localises to the cytoplasm. The protein localises to the cytoskeleton. Plays an important role in the organization of the cytoskeleton. Binds to and sequesters actin monomers (G actin) and therefore inhibits actin polymerization. In terms of biological role, seraspenide inhibits the entry of hematopoietic pluripotent stem cells into the S-phase. This chain is Thymosin beta-4 (TMSB4), found in Oryctolagus cuniculus (Rabbit).